A 359-amino-acid chain; its full sequence is Mitochondrial glutathione transporter SLC25A39 (359 aa).

Residues 1–18 (MGDRPAVRISAAITPVQQ) lie on the Mitochondrial intermembrane side of the membrane. Solcar repeat units follow at residues 13 to 149 (ITPV…LRDF), 157 to 241 (HGDH…VKAQ), and 251 to 346 (ASFT…GKTF). A helical membrane pass occupies residues 19–39 (MLASGTGAVLTSLFVTPLDVV). Over 40–119 (KIRLQAQQTP…VKITHNEGLR (80 aa)) the chain is Mitochondrial matrix. Cys-72, Cys-76, Cys-86, and Cys-92 together coordinate [2Fe-2S] cluster. The helical transmembrane segment at 120–140 (SLWSGLPPTLVMAVPATVIYF) threads the bilayer. Residues 141-162 (TCYDQLRDFLCYSMGYHGDHIP) lie on the Mitochondrial intermembrane side of the membrane. The chain crosses the membrane as a helical span at residues 163–183 (LIAGGLARLGAVSVISPLELV). Over 184-212 (RTKMQSRRLQYSELMVCIRSSVAQDGWLS) the chain is Mitochondrial matrix. A helical transmembrane segment spans residues 213–233 (LWRGWGPTVLRDVPFSALYWF). Residues 234 to 253 (NYELVKAQLCEHYRTPQASF) are Mitochondrial intermembrane-facing. The chain crosses the membrane as a helical span at residues 254 to 274 (TISFTAGAVSGAIAAVLTLPF). The Mitochondrial matrix segment spans residues 275 to 316 (DVVKTRRQIQLGEMEALGAVSMKKPSSTWNMMRNIWIDMGYK). The helical transmembrane segment at 317–337 (GLFAGFLPRVIKVAPACAVMI) threads the bilayer. The Mitochondrial intermembrane segment spans residues 338 to 359 (STYEFGKTFFQERNLHQARCGL).

The protein belongs to the mitochondrial carrier (TC 2.A.29) family. Cleaved and degraded by AFG3L2; degradation by AFG3L2 is regulated by the ability of SLC25A39 to bind iron-sulfur. In absence of mitochondrial glutathione, SLC25A39 binds iron-sulfur, preventing cleavage and degradation by AFG3L2. The presence of mitochondrial glutathione prevents iron-sulfur-binding to SLC25A39, promoting cleavage and degradation by AFG3L2.

The protein resides in the mitochondrion inner membrane. The catalysed reaction is glutathione(in) = glutathione(out). The activity of SLC25A39 is regulated by levels of mitochondrial glutathione via its ability to bind [2Fe-2S] iron-sulfur cluster. Upon physiological levels of mitochondrial glutathione, glutathione prevents iron-sulfur-binding to SLC25A39 promoting cleavage and degradation by AFG3L2. Upon depletion of mitochondrial glutathione, SLC25A39 binds iron-sulfur, preventing cleavage and degradation by AFG3L2. In terms of biological role, mitochondrial transporter required for glutathione import into mitochondria. Glutathione, which plays key roles in oxidative metabolism, is produced exclusively in the cytosol and is imported in many organelles. Mitochondrial glutathione is required for the activity and stability of proteins containing iron-sulfur clusters, as well as erythropoiesis. Involved in the early steps of heme biosynthesis. The chain is Mitochondrial glutathione transporter SLC25A39 (slc25a39) from Danio rerio (Zebrafish).